A 452-amino-acid polypeptide reads, in one-letter code: tRNA modification GTPase MnmE (452 aa).

R21, E78, and K118 together coordinate (6S)-5-formyl-5,6,7,8-tetrahydrofolate. Positions 214 to 375 (GMKVVIAGRP…LREHLKQSMG (162 aa)) constitute a TrmE-type G domain. N224 is a K(+) binding site. Residues 224 to 229 (NAGKSS), 243 to 249 (TDIAGTT), 268 to 271 (DTAG), and 333 to 336 (NKAD) contribute to the GTP site. Mg(2+) is bound at residue S228. The K(+) site is built by T243, I245, and T248. T249 serves as a coordination point for Mg(2+). K452 is a (6S)-5-formyl-5,6,7,8-tetrahydrofolate binding site.

Belongs to the TRAFAC class TrmE-Era-EngA-EngB-Septin-like GTPase superfamily. TrmE GTPase family. As to quaternary structure, homodimer. Heterotetramer of two MnmE and two MnmG subunits. Requires K(+) as cofactor.

Its subcellular location is the cytoplasm. Its function is as follows. Exhibits a very high intrinsic GTPase hydrolysis rate. Involved in the addition of a carboxymethylaminomethyl (cmnm) group at the wobble position (U34) of certain tRNAs, forming tRNA-cmnm(5)s(2)U34. The polypeptide is tRNA modification GTPase MnmE (Pasteurella multocida (strain Pm70)).